The primary structure comprises 1482 residues: Chromosome partition protein MukB (1482 aa).

34-41 (GGNGAGKS) provides a ligand contact to ATP. 5 coiled-coil regions span residues 326-472 (LEAD…QTAH), 507-602 (NQRH…RRAP), 780-805 (RAARENRIETLHAERESLSERFATLS), 832-1110 (DDPE…REQV), and 1209-1265 (VEAI…LQSV). Residues 666 to 783 (PGGSEDPRLN…SLPLFGRAAR (118 aa)) form a flexible hinge region.

The protein belongs to the SMC family. MukB subfamily. As to quaternary structure, homodimerization via its hinge domain. Binds to DNA via its C-terminal region. Interacts, and probably forms a ternary complex, with MukE and MukF via its C-terminal region. The complex formation is stimulated by calcium or magnesium. Interacts with tubulin-related protein FtsZ.

It is found in the cytoplasm. It localises to the nucleoid. In terms of biological role, plays a central role in chromosome condensation, segregation and cell cycle progression. Functions as a homodimer, which is essential for chromosome partition. Involved in negative DNA supercoiling in vivo, and by this means organize and compact chromosomes. May achieve or facilitate chromosome segregation by condensation DNA from both sides of a centrally located replisome during cell division. In Klebsiella pneumoniae subsp. pneumoniae (strain ATCC 700721 / MGH 78578), this protein is Chromosome partition protein MukB.